We begin with the raw amino-acid sequence, 179 residues long: Putative endogenous retrovirus group FC1 Env polyprotein (179 aa).

The N-terminal stretch at 1 to 22 is a signal peptide; the sequence is MARPSPLCLLLLLTLLPPIVPS. The tract at residues 23-179 is truncated surface protein; it reads NSLLTEPPFR…SKLRIFRTYV (157 aa). The N-linked (GlcNAc...) asparagine glycan is linked to Asn69.

This sequence belongs to the gamma type-C retroviral envelope protein family. HERV class-I F(c)1 env subfamily.

The protein localises to the virion. Retroviral envelope proteins mediate receptor recognition and membrane fusion during early infection. Endogenous envelope proteins may have kept, lost or modified their original function during evolution. The protein is Putative endogenous retrovirus group FC1 Env polyprotein (ERVFC1) of Gorilla gorilla gorilla (Western lowland gorilla).